Consider the following 202-residue polypeptide: Small ribosomal subunit protein uS4c (202 aa).

Residues 90–153 (MRLDNVIFRL…KSEAIISKNI (64 aa)) enclose the S4 RNA-binding domain.

The protein belongs to the universal ribosomal protein uS4 family. Part of the 30S ribosomal subunit. Contacts protein S5. The interaction surface between S4 and S5 is involved in control of translational fidelity.

It localises to the plastid. It is found in the chloroplast. One of the primary rRNA binding proteins, it binds directly to 16S rRNA where it nucleates assembly of the body of the 30S subunit. Its function is as follows. With S5 and S12 plays an important role in translational accuracy. This Hypopterygium didictyon protein is Small ribosomal subunit protein uS4c (rps4).